We begin with the raw amino-acid sequence, 248 residues long: Probable transcriptional regulatory protein Pcar_2335 (248 aa).

The protein belongs to the TACO1 family.

The protein resides in the cytoplasm. The sequence is that of Probable transcriptional regulatory protein Pcar_2335 from Syntrophotalea carbinolica (strain DSM 2380 / NBRC 103641 / GraBd1) (Pelobacter carbinolicus).